A 359-amino-acid polypeptide reads, in one-letter code: Nicotinate-nucleotide--dimethylbenzimidazole phosphoribosyltransferase (359 aa).

Glutamate 318 functions as the Proton acceptor in the catalytic mechanism.

The protein belongs to the CobT family. As to quaternary structure, homodimer.

The catalysed reaction is 5,6-dimethylbenzimidazole + nicotinate beta-D-ribonucleotide = alpha-ribazole 5'-phosphate + nicotinate + H(+). Its pathway is nucleoside biosynthesis; alpha-ribazole biosynthesis; alpha-ribazole from 5,6-dimethylbenzimidazole: step 1/2. In terms of biological role, catalyzes the synthesis of alpha-ribazole-5'-phosphate from nicotinate mononucleotide (NAMN) and 5,6-dimethylbenzimidazole (DMB). This Escherichia coli (strain ATCC 8739 / DSM 1576 / NBRC 3972 / NCIMB 8545 / WDCM 00012 / Crooks) protein is Nicotinate-nucleotide--dimethylbenzimidazole phosphoribosyltransferase.